A 72-amino-acid polypeptide reads, in one-letter code: EAGEECDCGAPENPCCDAATCKLRPGAQCAEGLCCDQCRFKGAGKICRRARGDNPDDRCTGQSADCPRNRFH.

Positions glutamate 1–histidine 72 constitute a Disintegrin domain. 6 disulfide bridges follow: cysteine 6–cysteine 21, cysteine 8–cysteine 16, cysteine 15–cysteine 38, cysteine 29–cysteine 35, cysteine 34–cysteine 59, and cysteine 47–cysteine 66. The Cell attachment site signature appears at arginine 51–aspartate 53. Positions arginine 51–histidine 72 are disordered.

Belongs to the venom metalloproteinase (M12B) family. P-II subfamily. P-IIa sub-subfamily. In terms of assembly, monomer. In terms of tissue distribution, expressed by the venom gland.

The protein localises to the secreted. In terms of biological role, inhibits fibrinogen interaction with platelets. Acts by binding to alpha-IIb/beta-3 (ITGA2B/ITGB3) on the platelet surface and inhibits aggregation induced by ADP, thrombin, platelet-activating factor and collagen. This Bothrops cotiara (Cotiara) protein is Disintegrin cotiarin.